The following is a 268-amino-acid chain: Probable 6-phosphogluconolactonase 1 (268 aa).

The protein belongs to the glucosamine/galactosamine-6-phosphate isomerase family. 6-phosphogluconolactonase subfamily.

The protein resides in the cytoplasm. It is found in the cytosol. The catalysed reaction is 6-phospho-D-glucono-1,5-lactone + H2O = 6-phospho-D-gluconate + H(+). Its pathway is carbohydrate degradation; pentose phosphate pathway; D-ribulose 5-phosphate from D-glucose 6-phosphate (oxidative stage): step 2/3. Catalyzes the hydrolysis of 6-phosphogluconolactone to 6-phosphogluconate. This is Probable 6-phosphogluconolactonase 1 from Arabidopsis thaliana (Mouse-ear cress).